A 170-amino-acid polypeptide reads, in one-letter code: CDP-archaeol synthase (170 aa).

A run of 5 helical transmembrane segments spans residues 9–29 (AFWY…LGGG), 53–73 (GFFG…FLLP), 79–99 (LGIA…GDLI), 114–134 (PAVG…AYPV), and 140–160 (GEVL…NIFA).

The protein belongs to the CDP-archaeol synthase family. Requires Mg(2+) as cofactor.

Its subcellular location is the cell membrane. The enzyme catalyses 2,3-bis-O-(geranylgeranyl)-sn-glycerol 1-phosphate + CTP + H(+) = CDP-2,3-bis-O-(geranylgeranyl)-sn-glycerol + diphosphate. The protein operates within membrane lipid metabolism; glycerophospholipid metabolism. Its function is as follows. Catalyzes the formation of CDP-2,3-bis-(O-geranylgeranyl)-sn-glycerol (CDP-archaeol) from 2,3-bis-(O-geranylgeranyl)-sn-glycerol 1-phosphate (DGGGP) and CTP. This reaction is the third ether-bond-formation step in the biosynthesis of archaeal membrane lipids. The polypeptide is CDP-archaeol synthase (Pyrococcus horikoshii (strain ATCC 700860 / DSM 12428 / JCM 9974 / NBRC 100139 / OT-3)).